The sequence spans 196 residues: ATP-dependent Clp protease proteolytic subunit (196 aa).

Ser99 (nucleophile) is an active-site residue. His124 is a catalytic residue.

The protein belongs to the peptidase S14 family. Fourteen ClpP subunits assemble into 2 heptameric rings which stack back to back to give a disk-like structure with a central cavity, resembling the structure of eukaryotic proteasomes.

The protein resides in the cytoplasm. It carries out the reaction Hydrolysis of proteins to small peptides in the presence of ATP and magnesium. alpha-casein is the usual test substrate. In the absence of ATP, only oligopeptides shorter than five residues are hydrolyzed (such as succinyl-Leu-Tyr-|-NHMec, and Leu-Tyr-Leu-|-Tyr-Trp, in which cleavage of the -Tyr-|-Leu- and -Tyr-|-Trp bonds also occurs).. Its function is as follows. Cleaves peptides in various proteins in a process that requires ATP hydrolysis. Has a chymotrypsin-like activity. Plays a major role in the degradation of misfolded proteins. In Campylobacter lari (strain RM2100 / D67 / ATCC BAA-1060), this protein is ATP-dependent Clp protease proteolytic subunit.